The chain runs to 37 residues: Cytochrome b6-f complex subunit 5 (37 aa).

A helical membrane pass occupies residues 5–25; sequence LLSGIVLGLIVVTLSGLFYAA.

Belongs to the PetG family. As to quaternary structure, the 4 large subunits of the cytochrome b6-f complex are cytochrome b6, subunit IV (17 kDa polypeptide, PetD), cytochrome f and the Rieske protein, while the 4 small subunits are PetG, PetL, PetM and PetN. The complex functions as a dimer.

It localises to the cellular thylakoid membrane. Its function is as follows. Component of the cytochrome b6-f complex, which mediates electron transfer between photosystem II (PSII) and photosystem I (PSI), cyclic electron flow around PSI, and state transitions. PetG is required for either the stability or assembly of the cytochrome b6-f complex. The protein is Cytochrome b6-f complex subunit 5 of Trichormus variabilis (strain ATCC 29413 / PCC 7937) (Anabaena variabilis).